A 167-amino-acid polypeptide reads, in one-letter code: NADH-quinone oxidoreductase subunit I (167 aa).

2 4Fe-4S ferredoxin-type domains span residues 59–88 (RKYK…IEAQ) and 98–127 (VRYD…EGPN). [4Fe-4S] cluster-binding residues include Cys68, Cys71, Cys74, Cys78, Cys107, Cys110, Cys113, and Cys117.

This sequence belongs to the complex I 23 kDa subunit family. NDH-1 is composed of 14 different subunits. Subunits NuoA, H, J, K, L, M, N constitute the membrane sector of the complex. [4Fe-4S] cluster serves as cofactor.

It is found in the cell inner membrane. The catalysed reaction is a quinone + NADH + 5 H(+)(in) = a quinol + NAD(+) + 4 H(+)(out). NDH-1 shuttles electrons from NADH, via FMN and iron-sulfur (Fe-S) centers, to quinones in the respiratory chain. The immediate electron acceptor for the enzyme in this species is believed to be ubiquinone. Couples the redox reaction to proton translocation (for every two electrons transferred, four hydrogen ions are translocated across the cytoplasmic membrane), and thus conserves the redox energy in a proton gradient. In Ehrlichia canis (strain Jake), this protein is NADH-quinone oxidoreductase subunit I.